Reading from the N-terminus, the 399-residue chain is Glycosyltransferase BC10 (399 aa).

Over 1–17 the chain is Cytoplasmic; sequence MKPPRRWMYGRGGGKGK. The chain crosses the membrane as a helical; Signal-anchor for type II membrane protein span at residues 18–38; the sequence is PAGLLLLGVFLCLSVVLLLLL. Residues 39–399 lie on the Lumenal side of the membrane; sequence HGSSPSLEGE…LIAANGASTM (361 aa). 2 N-linked (GlcNAc...) asparagine glycosylation sites follow: Asn142 and Asn188.

It belongs to the glycosyltransferase 14 family. In terms of tissue distribution, expressed in roots, culms, leaves and panicles. Expressed in vascular bundles of leaf sheaths and stems where sclerenchyma cells are developing. Expressed in mechanical tissues of young organs, such as young leaf sheaths, stems and tiller buds.

Its subcellular location is the membrane. Glycosyltransferase required for the regulation of cellulose biosynthesis in the cell wall. Required for the biosynthesis of hexoses (glucose, mannose and galactose) in both cellulosic and non-cellulosic (pectins and hemicelluloses) components of cell walls. Required for the formation of arabinogalactan proteins which contribute to the strengthening of cell walls. Possesses low glycosyltransferase activity. The sequence is that of Glycosyltransferase BC10 from Oryza sativa subsp. japonica (Rice).